A 233-amino-acid polypeptide reads, in one-letter code: Demethylmenaquinone methyltransferase (233 aa).

S-adenosyl-L-methionine is bound by residues threonine 58, aspartate 79, and 106 to 107 (NA).

The protein belongs to the class I-like SAM-binding methyltransferase superfamily. MenG/UbiE family.

The catalysed reaction is a 2-demethylmenaquinol + S-adenosyl-L-methionine = a menaquinol + S-adenosyl-L-homocysteine + H(+). It participates in quinol/quinone metabolism; menaquinone biosynthesis; menaquinol from 1,4-dihydroxy-2-naphthoate: step 2/2. Functionally, methyltransferase required for the conversion of demethylmenaquinol (DMKH2) to menaquinol (MKH2). The sequence is that of Demethylmenaquinone methyltransferase from Bacillus subtilis (strain 168).